Reading from the N-terminus, the 492-residue chain is GlcNAc-binding protein A (492 aa).

An N-terminal signal peptide occupies residues 1-23 (MNKSSTKTLIALSMMAVSSGVSA). In terms of domain architecture, Chitin-binding type-4 spans 24–204 (HGYVSETNDG…AFYNVIDVKF (181 aa)). A Chitin-binding type-3 domain is found at 443–484 (AGTKVLAEDGNVYQCKEFPYSGYCVQWTETATNFAPGVGSDW).

The protein belongs to the GbpA family.

It localises to the secreted. Its function is as follows. Probably interacts with GlcNAc residues. May promote attachment to both epithelial cell surfaces and chitin. In Aliivibrio fischeri (strain ATCC 700601 / ES114) (Vibrio fischeri), this protein is GlcNAc-binding protein A.